Reading from the N-terminus, the 264-residue chain is Small ribosomal subunit protein uS3 (264 aa).

The 69-residue stretch at 39–107 (VREFLKKKLK…PVHVNIEEIR (69 aa)) folds into the KH type-2 domain. Residues 211-264 (NDAPVVEEPQEERRKRPGRPEGRRREGEGRPGGQRRGAGAGGRRSGGADAKTGE) form a disordered region. Residues 221 to 239 (EERRKRPGRPEGRRREGEG) show a composition bias toward basic and acidic residues. Over residues 240 to 255 (RPGGQRRGAGAGGRRS) the composition is skewed to gly residues.

Belongs to the universal ribosomal protein uS3 family. In terms of assembly, part of the 30S ribosomal subunit. Forms a tight complex with proteins S10 and S14.

Its function is as follows. Binds the lower part of the 30S subunit head. Binds mRNA in the 70S ribosome, positioning it for translation. The polypeptide is Small ribosomal subunit protein uS3 (Ralstonia nicotianae (strain ATCC BAA-1114 / GMI1000) (Ralstonia solanacearum)).